A 182-amino-acid chain; its full sequence is NADH-quinone oxidoreductase subunit B 2 (182 aa).

[4Fe-4S] cluster contacts are provided by Cys-57, Cys-58, Cys-123, and Cys-153.

Belongs to the complex I 20 kDa subunit family. As to quaternary structure, NDH-1 is composed of 14 different subunits. Subunits NuoB, C, D, E, F, and G constitute the peripheral sector of the complex. It depends on [4Fe-4S] cluster as a cofactor.

The protein resides in the cell membrane. It carries out the reaction a quinone + NADH + 5 H(+)(in) = a quinol + NAD(+) + 4 H(+)(out). NDH-1 shuttles electrons from NADH, via FMN and iron-sulfur (Fe-S) centers, to quinones in the respiratory chain. The immediate electron acceptor for the enzyme in this species is believed to be a menaquinone. Couples the redox reaction to proton translocation (for every two electrons transferred, four hydrogen ions are translocated across the cytoplasmic membrane), and thus conserves the redox energy in a proton gradient. This Symbiobacterium thermophilum (strain DSM 24528 / JCM 14929 / IAM 14863 / T) protein is NADH-quinone oxidoreductase subunit B 2.